Here is a 317-residue protein sequence, read N- to C-terminus: 1D-myo-inositol 2-acetamido-2-deoxy-alpha-D-glucopyranoside deacetylase (317 aa).

Residues histidine 15, aspartate 18, and histidine 154 each coordinate Zn(2+). Residues 289–317 form a disordered region; the sequence is QDLDNRNPNSQPPADQAREDHLLTGLGFA.

This sequence belongs to the MshB deacetylase family. Zn(2+) serves as cofactor.

The catalysed reaction is 1D-myo-inositol 2-acetamido-2-deoxy-alpha-D-glucopyranoside + H2O = 1D-myo-inositol 2-amino-2-deoxy-alpha-D-glucopyranoside + acetate. Its function is as follows. Catalyzes the deacetylation of 1D-myo-inositol 2-acetamido-2-deoxy-alpha-D-glucopyranoside (GlcNAc-Ins) in the mycothiol biosynthesis pathway. This is 1D-myo-inositol 2-acetamido-2-deoxy-alpha-D-glucopyranoside deacetylase from Segniliparus rotundus (strain ATCC BAA-972 / CDC 1076 / CIP 108378 / DSM 44985 / JCM 13578).